The following is a 269-amino-acid chain: Tryptophan synthase alpha chain (269 aa).

Residues glutamate 49 and aspartate 60 each act as proton acceptor in the active site.

The protein belongs to the TrpA family. As to quaternary structure, tetramer of two alpha and two beta chains.

The enzyme catalyses (1S,2R)-1-C-(indol-3-yl)glycerol 3-phosphate + L-serine = D-glyceraldehyde 3-phosphate + L-tryptophan + H2O. It functions in the pathway amino-acid biosynthesis; L-tryptophan biosynthesis; L-tryptophan from chorismate: step 5/5. Functionally, the alpha subunit is responsible for the aldol cleavage of indoleglycerol phosphate to indole and glyceraldehyde 3-phosphate. This is Tryptophan synthase alpha chain from Delftia acidovorans (strain DSM 14801 / SPH-1).